Consider the following 618-residue polypeptide: DNA mismatch repair protein MutL (618 aa).

Residues 367-381 (EPTAAREPATPRYSG) show a composition bias toward low complexity. The segment at 367 to 402 (EPTAAREPATPRYSGGASGGNGGRQSAGGWPHAQPG) is disordered. Residues 382–392 (GASGGNGGRQS) show a composition bias toward gly residues.

It belongs to the DNA mismatch repair MutL/HexB family.

In terms of biological role, this protein is involved in the repair of mismatches in DNA. It is required for dam-dependent methyl-directed DNA mismatch repair. May act as a 'molecular matchmaker', a protein that promotes the formation of a stable complex between two or more DNA-binding proteins in an ATP-dependent manner without itself being part of a final effector complex. This chain is DNA mismatch repair protein MutL, found in Salmonella dublin (strain CT_02021853).